Reading from the N-terminus, the 20-residue chain is Equinatoxin-1'' (20 aa).

The plays an important role in the hemolytic activity stretch occupies residues 3–12; that stretch reads AVAGAVIEGA. Residues 11–20 form an N-terminal region region; the sequence is GATLTFNVLQ.

It belongs to the actinoporin family. Sea anemone subfamily. In terms of assembly, octamer or nonamer in membranes. Monomer in the soluble state.

Its subcellular location is the secreted. It is found in the nematocyst. The protein resides in the target cell membrane. Functionally, pore-forming protein that forms cations-selective hydrophilic pores of around 1 nm and causes cardiac stimulation and cytolysis. Pore formation is a multi-step process that involves specific recognition of membrane sphingomyelin (but neither cholesterol nor phosphatidylcholine) using aromatic rich region and adjacent phosphocholine (POC) binding site, firm binding to the membrane (mainly driven by hydrophobic interactions) accompanied by the transfer of the N-terminal region to the lipid-water interface and finally pore formation after oligomerization of monomers. Cytolytic effects include red blood cells hemolysis, platelet aggregation and lysis, cytotoxic and cytostatic effects on fibroblasts. Lethality in mammals has been ascribed to severe vasospasm of coronary vessels, cardiac arrhythmia, and inotropic effects. The polypeptide is Equinatoxin-1'' (Actinia equina (Beadlet anemone)).